A 465-amino-acid polypeptide reads, in one-letter code: Argininosuccinate lyase (465 aa).

Belongs to the lyase 1 family. Argininosuccinate lyase subfamily.

The protein localises to the cytoplasm. It carries out the reaction 2-(N(omega)-L-arginino)succinate = fumarate + L-arginine. The protein operates within amino-acid biosynthesis; L-arginine biosynthesis; L-arginine from L-ornithine and carbamoyl phosphate: step 3/3. The protein is Argininosuccinate lyase of Halorhodospira halophila (strain DSM 244 / SL1) (Ectothiorhodospira halophila (strain DSM 244 / SL1)).